We begin with the raw amino-acid sequence, 627 residues long: Protein CER1-like 1 (627 aa).

A run of 5 helical transmembrane segments spans residues 19 to 39, 48 to 68, 126 to 146, 186 to 206, and 328 to 348; these read FKYL…VTAV, LMIV…ISVS, GAIL…YWFH, LLFA…IVSI, and YLTC…TSAI. A Fatty acid hydroxylase domain is found at 138-272; sequence VEFLYYWFHR…MPIYDFIYGT (135 aa).

This sequence belongs to the sterol desaturase family. In terms of tissue distribution, expressed in flowers and siliques. Not detected in pollen, pedicels and seeds.

The protein localises to the membrane. The polypeptide is Protein CER1-like 1 (Arabidopsis thaliana (Mouse-ear cress)).